A 435-amino-acid polypeptide reads, in one-letter code: FAD-dependent monooxygenase ATEG_07662 (435 aa).

A helical transmembrane segment spans residues 8–28 (PLDVAIIGGGIIGIMTALGLL). FAD-binding residues include Glu38, Ala51, and Arg119. Asn191 carries an N-linked (GlcNAc...) asparagine glycan. Arg201 is a catalytic residue. Asp317 and Ala330 together coordinate FAD.

This sequence belongs to the paxM FAD-dependent monooxygenase family. It depends on FAD as a cofactor.

The protein resides in the membrane. The protein operates within secondary metabolite biosynthesis. FAD-dependent monooxygenase; part of the cluster B that mediates the biosynthesis of azasperpyranones, members of the azaphilone family that exhibit anti-cancer activities. Azasperpyranones are synthesized by 2 clusters, A and B. Cluster A is responsible for the production of the polyhydric phenol moiety while the azaphilonoid scaffold is produced by the cluster B. The non-reducing polyketide synthase ATEG_03629 produces 5-methyl orsellinic acid, which is then reduced to 5-methyl orsellinic aldehyde by the NRPS-like protein ATEG_03630. 5-methyl orsellinic aldehyde is then first hydroxylated by the FAD-dependent monooxygenase ATEG_03635 and subsequently hydroxylated by the cytochrome P450 monooxygenase ATEG_03631 to produce the unstable polyhydric phenol precursor of azasperpyranones. On the other hand, the polyketide synthase ATEG_07659 is responsible for producing the 3,5-dimethyloctadienone moiety from acetyl-CoA, three malonyl-CoA, and two S-adenosyl methionines (SAM). The 3,5-dimethyloctadienone moiety is then loaded onto the SAT domain of ATEG_07661 and extended with four malonyl-CoA and one SAM, which leads to the formation of 2,4-dihydroxy-6-(5,7-dimethyl-2-oxo-trans-3-trans-5-nonadienyl)-3-methylbenzaldehyde (compound 8) after reductive release and aldol condensation. The FAD-dependent monooxygenase ATEG_07662 is the next enzyme in the biosynthesis sequence and hydroxylates the side chain at the benzylic position of compound 8. In Aspergillus nidulans, afoF, the ortholog of the FAD-dependent oxygenase ATEG_07660, is the key enzyme for the biosynthesis of asperfuranone by catalyzing the hydroxylation at C-8 of to prevent the formation of a six-membered ring hemiacetal intermediate and thus facilitating the formation of a five-membered ring to produce asperfuranone. In Aspergillus terreus, ATEG_07660 is probably not functional, which leads to the formation of the six-membered ring hemiacetal intermediate presperpyranone instead of asperfuranone. Finally, ATEG_03636 is involved in the condensation of the polyhydric phenol moiety produced by cluster A and the perasperpyranone precursor produced by cluster B, to yield azasperpyranone A. Further modifications of azasperpyranone A result in the production of derivatives, including azasperpyranone B to F. In Aspergillus terreus (strain NIH 2624 / FGSC A1156), this protein is FAD-dependent monooxygenase ATEG_07662.